We begin with the raw amino-acid sequence, 281 residues long: 3-mercaptopyruvate sulfurtransferase (281 aa).

Rhodanese domains lie at 17–135 (DDPE…LLEE) and 165–278 (HENT…LPVE). Position 179 (Arg-179) interacts with substrate. Cys-238 functions as the Cysteine persulfide intermediate in the catalytic mechanism. The substrate specificity stretch occupies residues 238–244 (CGSGVTA).

The protein resides in the cytoplasm. The enzyme catalyses 2-oxo-3-sulfanylpropanoate + [thioredoxin]-dithiol = [thioredoxin]-disulfide + hydrogen sulfide + pyruvate + H(+). In terms of biological role, catalyzes the transfer of sulfur from 3-mercaptopyruvate to a thiol-containing acceptor to form an intramolecular disulfide releasing hydrogen sulfide and pyruvate. The protein is 3-mercaptopyruvate sulfurtransferase (sseA) of Escherichia coli O157:H7.